A 318-amino-acid polypeptide reads, in one-letter code: Ribose-phosphate pyrophosphokinase 2 (318 aa).

Position 96-101 (96-101) interacts with ATP; that stretch reads RQDKKD. Mg(2+)-binding residues include aspartate 128, histidine 130, aspartate 139, and aspartate 143. Histidine 130 contacts ATP. The binding of phosphoribosylpyrophosphate stretch occupies residues 212–227; that stretch reads KDRVAILVDDMADTCG.

This sequence belongs to the ribose-phosphate pyrophosphokinase family. Homodimer. The active form is probably a hexamer composed of 3 homodimers. It depends on Mg(2+) as a cofactor.

It catalyses the reaction D-ribose 5-phosphate + ATP = 5-phospho-alpha-D-ribose 1-diphosphate + AMP + H(+). Its pathway is metabolic intermediate biosynthesis; 5-phospho-alpha-D-ribose 1-diphosphate biosynthesis; 5-phospho-alpha-D-ribose 1-diphosphate from D-ribose 5-phosphate (route I): step 1/1. With respect to regulation, activated by magnesium and inorganic phosphate. Competitively or non-competitively inhibited by ADP, 2,3-bisphosphoglyceride or GDP. Functionally, catalyzes the synthesis of phosphoribosylpyrophosphate (PRPP) that is essential for nucleotide synthesis. This is Ribose-phosphate pyrophosphokinase 2 (prps2) from Xenopus tropicalis (Western clawed frog).